Here is a 121-residue protein sequence, read N- to C-terminus: Small ribosomal subunit protein uS13 (121 aa).

A disordered region spans residues 94-121 (GLPLRGQRTRTNARTRKGPRRAAQALKK).

It belongs to the universal ribosomal protein uS13 family. Part of the 30S ribosomal subunit. Forms a loose heterodimer with protein S19. Forms two bridges to the 50S subunit in the 70S ribosome.

Located at the top of the head of the 30S subunit, it contacts several helices of the 16S rRNA. In the 70S ribosome it contacts the 23S rRNA (bridge B1a) and protein L5 of the 50S subunit (bridge B1b), connecting the 2 subunits; these bridges are implicated in subunit movement. Contacts the tRNAs in the A and P-sites. In Burkholderia mallei (strain NCTC 10247), this protein is Small ribosomal subunit protein uS13.